The primary structure comprises 1464 residues: Alpha-glucan water dikinase, chloroplastic (1464 aa).

The N-terminal 77 residues, Met1–Ala77, are a transit peptide targeting the chloroplast. His1069 serves as the catalytic Tele-phosphohistidine intermediate.

The protein belongs to the PEP-utilizing enzyme family. In terms of assembly, homodimer. Mg(2+) is required as a cofactor. Expressed in leaves.

It is found in the plastid. It localises to the chloroplast. It catalyses the reaction [(1-&gt;4)-alpha-D-glucosyl](n) + n ATP + n H2O = [(1-&gt;4)-6-phospho-alpha-D-glucosyl](n) + n AMP + n phosphate + 2n H(+). It carries out the reaction ATP + protein L-histidine = ADP + protein N-phospho-L-histidine.. Functionally, mediates the incorporation of phosphate into starch-like alpha-glucan, mostly at the C-6 position of glucose units. Acts as an overall regulator of starch mobilization. Required for starch degradation, suggesting that the phosphate content of starch regulates its degradability. More active on alpha-1,6 branched amylopectin. This chain is Alpha-glucan water dikinase, chloroplastic (R1), found in Solanum tuberosum (Potato).